The primary structure comprises 351 residues: Nicotinate-nucleotide--dimethylbenzimidazole phosphoribosyltransferase (351 aa).

The active-site Proton acceptor is the Glu317.

Belongs to the CobT family.

The catalysed reaction is 5,6-dimethylbenzimidazole + nicotinate beta-D-ribonucleotide = alpha-ribazole 5'-phosphate + nicotinate + H(+). The protein operates within nucleoside biosynthesis; alpha-ribazole biosynthesis; alpha-ribazole from 5,6-dimethylbenzimidazole: step 1/2. Functionally, catalyzes the synthesis of alpha-ribazole-5'-phosphate from nicotinate mononucleotide (NAMN) and 5,6-dimethylbenzimidazole (DMB). In Bradyrhizobium sp. (strain ORS 278), this protein is Nicotinate-nucleotide--dimethylbenzimidazole phosphoribosyltransferase.